Reading from the N-terminus, the 324-residue chain is Cyclic GMP-AMP synthase CdnE03 (324 aa).

Mg(2+) is bound by residues aspartate 87 and aspartate 89. ATP-binding positions include aspartate 89, 144 to 145 (NK), and aspartate 159. Aspartate 159 lines the Mg(2+) pocket. Residues lysine 224 and serine 243 each coordinate GTP.

The protein belongs to the CD-NTase family. E03 subfamily. Mg(2+) serves as cofactor.

It carries out the reaction GTP + ATP = 3',2'-cGAMP + 2 diphosphate. Its activity is regulated as follows. Activated by a virus-derived, approximately 400 nucleotide RNA (called CBASS-activating bacteriophage RNA, cabRNA) that begins in the viral terminase subunit terS and extends into terL. RNA secondary and/or tertiary structure, as well as viral infection itself, are important for CdnE activation. A much longer RNA (escaper RNA) with a different secondary structure, derived from a terS-mutated virus still binds to this protein, but does not activate its nucleotide cyclase activity. Shorter viral-derived RNAs (34 and 49 nt) with extensive predicted secondary structure also activate the enzyme, although not as well as full-length cabRNA. In terms of biological role, cyclic nucleotide synthase (second messenger synthase) of a CBASS antivirus system. CBASS (cyclic oligonucleotide-based antiphage signaling system) provides immunity against bacteriophage. The CD-NTase protein synthesizes cyclic nucleotides in response to infection; these serve as specific second messenger signals. The signals activate a diverse range of effectors, leading to bacterial cell death and thus abortive phage infection. The effector for this system is downstream Cap15. A type I-B CBASS system. Its function is as follows. Cyclic dinucleotide synthase that catalyzes the synthesis of 3',2'-cyclic GMP-AMP (cGAMP) from GTP and ATP upon activation by viral-derived cabRNA. Binds cabRNA via positive charges in its N-terminus. Functionally, protects S.aureus against phage infection. When the CBASS operon (cdnE-cap15) is introduced in S.aureus strain RN4220 there is strong protection against lytic DNA phages 80alpha-vir and phi-NM1-gamma-6 but little to no protection against phages phi-NM4-gamma-4 or phi-12-gamma-3. This Staphylococcus schleiferi protein is Cyclic GMP-AMP synthase CdnE03.